We begin with the raw amino-acid sequence, 205 residues long: Probable GTP-binding protein EngB (205 aa).

The EngB-type G domain maps to 27-201 (QGMEVAFAGR…QNKLNAWFSG (175 aa)). GTP is bound by residues 35 to 42 (GRSNAGKS), 62 to 66 (GRTQL), 80 to 83 (DLPG), 147 to 150 (TKVD), and 180 to 182 (FSS). 2 residues coordinate Mg(2+): Ser-42 and Thr-64.

The protein belongs to the TRAFAC class TrmE-Era-EngA-EngB-Septin-like GTPase superfamily. EngB GTPase family. Mg(2+) is required as a cofactor.

Functionally, necessary for normal cell division and for the maintenance of normal septation. The protein is Probable GTP-binding protein EngB of Hamiltonella defensa subsp. Acyrthosiphon pisum (strain 5AT).